A 1115-amino-acid chain; its full sequence is Iron-regulated protein FrpA (1115 aa).

Hemolysin-type calcium-binding repeat units follow at residues 755 to 772 (FGHN…NDTL), 773 to 790 (IGGA…SDTY), 901 to 918 (NGGL…NDLL), 919 to 936 (NGDA…NDTL), 937 to 954 (DGGE…NDAL), 955 to 972 (NGGE…NDTL), and 973 to 990 (IGGA…SDTY).

Belongs to the RTX prokaryotic toxin (TC 1.C.11) family.

It is found in the cell outer membrane. Its subcellular location is the secreted. May participate in the pathogenesis of meningococcal disease. The chain is Iron-regulated protein FrpA (frpA) from Neisseria meningitidis serogroup C.